The primary structure comprises 430 residues: Serine--tRNA ligase (430 aa).

236–238 (TAE) lines the L-serine pocket. An ATP-binding site is contributed by 267–269 (RSE). Glutamate 290 contributes to the L-serine binding site. Residue 354 to 357 (EISS) coordinates ATP. Residue serine 390 participates in L-serine binding.

Belongs to the class-II aminoacyl-tRNA synthetase family. Type-1 seryl-tRNA synthetase subfamily. As to quaternary structure, homodimer. The tRNA molecule binds across the dimer.

Its subcellular location is the cytoplasm. It carries out the reaction tRNA(Ser) + L-serine + ATP = L-seryl-tRNA(Ser) + AMP + diphosphate + H(+). It catalyses the reaction tRNA(Sec) + L-serine + ATP = L-seryl-tRNA(Sec) + AMP + diphosphate + H(+). It participates in aminoacyl-tRNA biosynthesis; selenocysteinyl-tRNA(Sec) biosynthesis; L-seryl-tRNA(Sec) from L-serine and tRNA(Sec): step 1/1. Its function is as follows. Catalyzes the attachment of serine to tRNA(Ser). Is also able to aminoacylate tRNA(Sec) with serine, to form the misacylated tRNA L-seryl-tRNA(Sec), which will be further converted into selenocysteinyl-tRNA(Sec). The protein is Serine--tRNA ligase of Idiomarina loihiensis (strain ATCC BAA-735 / DSM 15497 / L2-TR).